A 695-amino-acid chain; its full sequence is D-(-)-3-hydroxybutyrate oligomer hydrolase (695 aa).

An N-terminal signal peptide occupies residues 1–17 (MTTHGWGTRILLGAALA). Ser308 serves as the catalytic Charge relay system.

The protein belongs to the D-(-)-3-hydroxybutyrate oligomer hydrolase family.

The protein resides in the secreted. It carries out the reaction (3R)-hydroxybutanoate dimer + H2O = 2 (R)-3-hydroxybutanoate + H(+). It participates in lipid metabolism; butanoate metabolism. In terms of biological role, participates in the degradation of poly-3-hydroxybutyrate (PHB). It works downstream of poly(3-hydroxybutyrate) depolymerase, hydrolyzing D(-)-3-hydroxybutyrate oligomers of various length (3HB-oligomers) into 3HB-monomers. This chain is D-(-)-3-hydroxybutyrate oligomer hydrolase, found in Burkholderia ambifaria (strain ATCC BAA-244 / DSM 16087 / CCUG 44356 / LMG 19182 / AMMD) (Burkholderia cepacia (strain AMMD)).